Reading from the N-terminus, the 184-residue chain is NADH-quinone oxidoreductase subunit B (184 aa).

C37, C38, C103, and C132 together coordinate [4Fe-4S] cluster. A disordered region spans residues 164-184 (HEREEAAKHALPTHSMKGLLR).

This sequence belongs to the complex I 20 kDa subunit family. NDH-1 is composed of 14 different subunits. Subunits NuoB, C, D, E, F, and G constitute the peripheral sector of the complex. Requires [4Fe-4S] cluster as cofactor.

Its subcellular location is the cell membrane. The enzyme catalyses a quinone + NADH + 5 H(+)(in) = a quinol + NAD(+) + 4 H(+)(out). Its function is as follows. NDH-1 shuttles electrons from NADH, via FMN and iron-sulfur (Fe-S) centers, to quinones in the respiratory chain. The immediate electron acceptor for the enzyme in this species is believed to be a menaquinone. Couples the redox reaction to proton translocation (for every two electrons transferred, four hydrogen ions are translocated across the cytoplasmic membrane), and thus conserves the redox energy in a proton gradient. The protein is NADH-quinone oxidoreductase subunit B of Acidothermus cellulolyticus (strain ATCC 43068 / DSM 8971 / 11B).